A 51-amino-acid chain; its full sequence is Lantibiotic lacticin-481 (51 aa).

A propeptide spanning residues 1–24 (MKEQNSFNLLQEVTESELDLILGA) is cleaved from the precursor. A cross-link (beta-methyllanthionine (Thr-Cys)) is located at residues 33 to 38 (TISHEC). 2 cross-links (lanthionine (Ser-Cys)) span residues 35 to 49 (SHECNMNSWQFVFTC) and 42 to 50 (SWQFVFTCC). Threonine 48 carries the (Z)-2,3-didehydrobutyrine modification.

The protein belongs to the type A lantibiotic family. In terms of assembly, monomer or homodimer. In terms of processing, maturation of lantibiotics involves the enzymatic conversion of Thr, and Ser into dehydrated AA and the formation of thioether bonds with cysteine. This is followed by membrane translocation and cleavage of the modified precursor. It is established that the 2,3-didehydrobutyrine is the Z-isomer.

Functionally, lanthionine-containing peptide antibiotic (lantibiotic) active on Gram-positive bacteria. The bactericidal activity of lantibiotics is based on depolarization of energized bacterial cytoplasmic membranes, initiated by the formation of aqueous transmembrane pores. Lacticin 481 is a broad spectrum bacteriocin exhibiting activity against a wide range of lactic acid bacteria and C.tyrobutyricum. The chain is Lantibiotic lacticin-481 (lctA) from Lactococcus lactis subsp. lactis (Streptococcus lactis).